Consider the following 1108-residue polypeptide: Isoleucine--tRNA ligase (1108 aa).

The short motif at P53–H63 is the 'HIGH' region element. Positions K654–R658 match the 'KMSKS' region motif. An ATP-binding site is contributed by K657.

The protein belongs to the class-I aminoacyl-tRNA synthetase family. IleS type 2 subfamily. Monomer. It depends on Zn(2+) as a cofactor.

It localises to the cytoplasm. It carries out the reaction tRNA(Ile) + L-isoleucine + ATP = L-isoleucyl-tRNA(Ile) + AMP + diphosphate. Its function is as follows. Catalyzes the attachment of isoleucine to tRNA(Ile). As IleRS can inadvertently accommodate and process structurally similar amino acids such as valine, to avoid such errors it has two additional distinct tRNA(Ile)-dependent editing activities. One activity is designated as 'pretransfer' editing and involves the hydrolysis of activated Val-AMP. The other activity is designated 'posttransfer' editing and involves deacylation of mischarged Val-tRNA(Ile). This is Isoleucine--tRNA ligase from Rickettsia bellii (strain RML369-C).